Reading from the N-terminus, the 348-residue chain is Protein RecA (348 aa).

Position 71 to 78 (71 to 78 (GVESSGKT)) interacts with ATP.

This sequence belongs to the RecA family.

It is found in the cytoplasm. Its function is as follows. Can catalyze the hydrolysis of ATP in the presence of single-stranded DNA, the ATP-dependent uptake of single-stranded DNA by duplex DNA, and the ATP-dependent hybridization of homologous single-stranded DNAs. It interacts with LexA causing its activation and leading to its autocatalytic cleavage. The polypeptide is Protein RecA (Aquifex pyrophilus).